The primary structure comprises 83 residues: MASDVRGRRKTKIGVVVSSKMEKTVVVRVERVYSHPQYAKVVRDSSKYYAHNELDVKEGDTVRIQETRPLSKTKRWRVVGRVN.

Belongs to the universal ribosomal protein uS17 family. As to quaternary structure, part of the 30S ribosomal subunit.

Functionally, one of the primary rRNA binding proteins, it binds specifically to the 5'-end of 16S ribosomal RNA. The chain is Small ribosomal subunit protein uS17 from Chlamydia trachomatis serovar L2 (strain ATCC VR-902B / DSM 19102 / 434/Bu).